The primary structure comprises 227 residues: uncharacterized protein (227 aa).

The next 7 helical transmembrane spans lie at 25 to 45, 49 to 69, 80 to 100, 111 to 131, 144 to 164, 165 to 185, and 201 to 221; these read LLGF…NAGF, AAFG…YGMI, TGVT…GPVL, KIVG…SALA, FLTV…FLGI, PALA…MIMW, and AALT…NILL.

The protein localises to the cell membrane. This is an uncharacterized protein from Neisseria meningitidis serogroup B (strain ATCC BAA-335 / MC58).